Here is a 174-residue protein sequence, read N- to C-terminus: Transgelin (174 aa).

Residues 3 to 109 (SQLEKEAREW…SIHSFSRYAA (107 aa)) form the Calponin-homology (CH) domain.

In terms of assembly, binds to actin.

The protein resides in the cytoplasm. Has actin-binding and actin-bundling activity and is a component of the actin patch. Stabilizes actin filaments against disassembly. Cross-links F-actin and is required for the formation of the contractile F-actin ring. This Schizosaccharomyces pombe (strain 972 / ATCC 24843) (Fission yeast) protein is Transgelin (stg1).